We begin with the raw amino-acid sequence, 340 residues long: N-acetyl-gamma-glutamyl-phosphate reductase (340 aa).

Residue Cys-151 is part of the active site.

It belongs to the NAGSA dehydrogenase family. Type 1 subfamily.

It localises to the cytoplasm. The catalysed reaction is N-acetyl-L-glutamate 5-semialdehyde + phosphate + NADP(+) = N-acetyl-L-glutamyl 5-phosphate + NADPH + H(+). It functions in the pathway amino-acid biosynthesis; L-arginine biosynthesis; N(2)-acetyl-L-ornithine from L-glutamate: step 3/4. Catalyzes the NADPH-dependent reduction of N-acetyl-5-glutamyl phosphate to yield N-acetyl-L-glutamate 5-semialdehyde. This is N-acetyl-gamma-glutamyl-phosphate reductase from Aquifex aeolicus (strain VF5).